We begin with the raw amino-acid sequence, 428 residues long: Enolase (428 aa).

Gln165 provides a ligand contact to (2R)-2-phosphoglycerate. Residue Glu207 is the Proton donor of the active site. The Mg(2+) site is built by Asp244, Glu283, and Asp310. (2R)-2-phosphoglycerate-binding residues include Lys335, Arg364, Ser365, and Lys386. Lys335 (proton acceptor) is an active-site residue.

The protein belongs to the enolase family. Mg(2+) serves as cofactor.

Its subcellular location is the cytoplasm. The protein localises to the secreted. It is found in the cell surface. The enzyme catalyses (2R)-2-phosphoglycerate = phosphoenolpyruvate + H2O. It participates in carbohydrate degradation; glycolysis; pyruvate from D-glyceraldehyde 3-phosphate: step 4/5. Catalyzes the reversible conversion of 2-phosphoglycerate (2-PG) into phosphoenolpyruvate (PEP). It is essential for the degradation of carbohydrates via glycolysis. In Chlamydia pneumoniae (Chlamydophila pneumoniae), this protein is Enolase.